The chain runs to 569 residues: Aspartic proteinase 3 (569 aa).

Positions 1–21 are cleaved as a signal peptide; the sequence is MKLKTVRSAVLSSLFASQVLG. A propeptide spanning residues 22 to 67 is cleaved from the precursor; the sequence is KIIPAANKRDDDSNSKFVKLPFHKLYGDSLENVGSDKKPEVRLLKR. Positions 83–475 constitute a Peptidase A1 domain; the sequence is YSVDLEVGTP…DLENLEISMA (393 aa). The N-linked (GlcNAc...) asparagine glycan is linked to asparagine 95. Aspartate 101 is a catalytic residue. Asparagine 203, asparagine 232, asparagine 242, asparagine 245, asparagine 299, and asparagine 358 each carry an N-linked (GlcNAc...) asparagine glycan. Aspartate 371 is an active-site residue. N-linked (GlcNAc...) asparagine glycosylation is found at asparagine 480, asparagine 522, and asparagine 532. Asparagine 548 is lipidated: GPI-anchor amidated asparagine. A propeptide spans 549 to 569 (removed in mature form); it reads VGDHIVPSLPLTLISLLFAFI.

Belongs to the peptidase A1 family. Consists of an alpha and a beta subunit, which are maintained together by a disulfide bond. In terms of processing, the zymogen is transported to the periplasm, where the propeptide is removed and the enzyme is further subjected to an internal, autocatalytic cleavage to generate an alpha/beta two-subunit endopeptidase. The proteolytic processing at the cell surface is regulated by the environmental pH. Extensively N-glycosylated.

It localises to the cell membrane. It catalyses the reaction Hydrolyzes various precursor proteins with Arg or Lys in P1, and commonly Arg or Lys also in P2. The P3 amino acid is usually non-polar, but otherwise additional basic amino acids are favorable in both non-prime and prime positions.. In terms of biological role, cleaves proteins C-terminally to mono- and paired-basic residues. Involved in the shedding of a subset of GPI-anchored plasma membrane proteins from the cell surface, including itself, GAS1 and MSB2. May also play a role in the maturation of GPI-mannoproteins associated with the cell wall. Can process the alpha-mating factor precursor. Required for cell wall integrity. The protein is Aspartic proteinase 3 (YPS1) of Saccharomyces cerevisiae (strain ATCC 204508 / S288c) (Baker's yeast).